The sequence spans 562 residues: Urease subunit alpha (562 aa).

One can recognise a Urease domain in the interval 131–562 (GGMDCHIHFI…LPMAQRYFLF (432 aa)). Ni(2+) is bound by residues His-136, His-138, and Lys-219. Lys-219 carries the post-translational modification N6-carboxylysine. His-221 serves as a coordination point for substrate. Ni(2+) contacts are provided by His-248 and His-274. Residue His-322 is the Proton donor of the active site. Asp-362 lines the Ni(2+) pocket.

The protein belongs to the metallo-dependent hydrolases superfamily. Urease alpha subunit family. As to quaternary structure, heterotrimer of UreA (gamma), UreB (beta) and UreC (alpha) subunits. Three heterotrimers associate to form the active enzyme. Ni cation serves as cofactor. Carboxylation allows a single lysine to coordinate two nickel ions.

The protein resides in the cytoplasm. The enzyme catalyses urea + 2 H2O + H(+) = hydrogencarbonate + 2 NH4(+). It functions in the pathway nitrogen metabolism; urea degradation; CO(2) and NH(3) from urea (urease route): step 1/1. This chain is Urease subunit alpha, found in Paracoccus denitrificans (strain Pd 1222).